We begin with the raw amino-acid sequence, 254 residues long: Triosephosphate isomerase (254 aa).

A substrate-binding site is contributed by 12 to 14 (NWK). The active-site Electrophile is the His99. Glu169 (proton acceptor) is an active-site residue. Substrate-binding positions include Gly175, Ser214, and 235 to 236 (GG).

The protein belongs to the triosephosphate isomerase family. As to quaternary structure, homodimer.

It localises to the cytoplasm. It carries out the reaction D-glyceraldehyde 3-phosphate = dihydroxyacetone phosphate. Its pathway is carbohydrate biosynthesis; gluconeogenesis. The protein operates within carbohydrate degradation; glycolysis; D-glyceraldehyde 3-phosphate from glycerone phosphate: step 1/1. In terms of biological role, involved in the gluconeogenesis. Catalyzes stereospecifically the conversion of dihydroxyacetone phosphate (DHAP) to D-glyceraldehyde-3-phosphate (G3P). This Chelativorans sp. (strain BNC1) protein is Triosephosphate isomerase.